The following is a 407-amino-acid chain: Polygalacturonase (407 aa).

The first 26 residues, 1–26 (MAPHLNIVPSMFVLLLLFISASKVQS), serve as a signal peptide directing secretion. PbH1 repeat units lie at residues 180 to 206 (CKNI…HMGK) and 207 to 228 (SEGV…SIGD). N-linked (GlcNAc...) asparagine glycosylation occurs at Asn182. Residue Asp221 is the Proton donor of the active site. A disulfide bond links Cys223 and Cys240. Residue His244 is part of the active site. PbH1 repeat units lie at residues 260-281 (VEGI…RIKT) and 290-311 (VSEI…LIDQ). Asn267, Asn272, Asn302, and Asn331 each carry an N-linked (GlcNAc...) asparagine glycan. 2 disulfide bridges follow: Cys351–Cys357 and Cys379–Cys395. A PbH1 5 repeat occupies 357–384 (CQNVELADIDIKHNGAEPATSQCLNVKP).

This sequence belongs to the glycosyl hydrolase 28 family. Pollen.

It localises to the secreted. The protein localises to the cell wall. It carries out the reaction (1,4-alpha-D-galacturonosyl)n+m + H2O = (1,4-alpha-D-galacturonosyl)n + (1,4-alpha-D-galacturonosyl)m.. Functionally, may function in the depolymerization of the pectin in its walls during pollen tube elongation, or in that of the pistil during pollination. In Gossypium hirsutum (Upland cotton), this protein is Polygalacturonase (G9).